The chain runs to 138 residues: Phospholipase A2 EC1 (138 aa).

The first 16 residues, 1 to 16 (MRTLWIVAVWLMSVEG), serve as a signal peptide directing secretion. 7 disulfide bridges follow: Cys-42/Cys-131, Cys-44/Cys-60, Cys-59/Cys-111, Cys-65/Cys-138, Cys-66/Cys-104, Cys-73/Cys-97, and Cys-91/Cys-102. Positions 43, 45, and 47 each coordinate Ca(2+). Residue His-63 is part of the active site. Asp-64 contributes to the Ca(2+) binding site. Asp-105 is a catalytic residue.

Belongs to the phospholipase A2 family. Group II subfamily. Ca(2+) is required as a cofactor.

The protein resides in the secreted. It catalyses the reaction a 1,2-diacyl-sn-glycero-3-phosphocholine + H2O = a 1-acyl-sn-glycero-3-phosphocholine + a fatty acid + H(+). The sequence is that of Phospholipase A2 EC1 from Echis coloratus (Carpet viper).